Consider the following 310-residue polypeptide: Tagatose-6-phosphate kinase (310 aa).

This sequence belongs to the carbohydrate kinase PfkB family. LacC subfamily.

It catalyses the reaction D-tagatofuranose 6-phosphate + ATP = D-tagatofuranose 1,6-bisphosphate + ADP + H(+). Its pathway is carbohydrate metabolism; D-tagatose 6-phosphate degradation; D-glyceraldehyde 3-phosphate and glycerone phosphate from D-tagatose 6-phosphate: step 1/2. In Lactococcus lactis subsp. lactis (Streptococcus lactis), this protein is Tagatose-6-phosphate kinase.